The chain runs to 862 residues: DNA mismatch repair protein MutS (862 aa).

608–615 (GPNMAGKS) contacts ATP.

Belongs to the DNA mismatch repair MutS family.

Its function is as follows. This protein is involved in the repair of mismatches in DNA. It is possible that it carries out the mismatch recognition step. This protein has a weak ATPase activity. The protein is DNA mismatch repair protein MutS of Borrelia garinii subsp. bavariensis (strain ATCC BAA-2496 / DSM 23469 / PBi) (Borreliella bavariensis).